The chain runs to 819 residues: FYN-binding protein 1 (819 aa).

A compositionally biased stretch (polar residues) spans methionine 1–alanine 45. A disordered region spans residues methionine 1–lysine 490. Lysine 3 bears the N6-acetyllysine mark. 2 positions are modified to phosphoserine: serine 28 and serine 46. Residues threonine 69–lysine 79 are compositionally biased toward basic and acidic residues. A compositionally biased stretch (pro residues) spans glycine 150–proline 160. At serine 222 the chain carries Phosphoserine. Basic and acidic residues-rich tracts occupy residues proline 237 to glycine 248 and asparagine 273 to leucine 285. Position 318 is a phosphoserine (serine 318). Composition is skewed to pro residues over residues glycine 342–proline 351 and leucine 380–isoleucine 412. The segment covering leucine 439–isoleucine 453 has biased composition (acidic residues). A Phosphoserine modification is found at serine 445. Residues glutamate 448–threonine 495 adopt a coiled-coil conformation. Residues aspartate 454–lysine 489 are compositionally biased toward basic and acidic residues. Positions lysine 479–lysine 493 match the Nuclear localization signal motif. Residues glutamine 499–aspartate 560 enclose the SH3 1 domain. Phosphotyrosine is present on tyrosine 559. Phosphoserine is present on residues serine 561 and serine 568. Residues tyrosine 584 to valine 587 carry the SH2-binding; to LCP2 motif. Disordered stretches follow at residues glutamate 589–threonine 635 and lysine 649–glutamate 728. Acidic residues predominate over residues threonine 610–glycine 626. Positions tyrosine 615 to isoleucine 618 match the SH2-binding; to FYN motif. A compositionally biased stretch (basic and acidic residues) spans lysine 649–glutamate 664. Positions asparagine 668 to histidine 677 are enriched in polar residues. Residues valine 682–alanine 692 show a composition bias toward acidic residues. Tyrosine 687 is subject to Phosphotyrosine. Residues arginine 710 to lysine 736 carry the Nuclear localization signal motif. Over residues alanine 711–glutamate 728 the composition is skewed to basic and acidic residues. Residues lysine 736–glycine 804 form the SH3 2 domain.

As to quaternary structure, part of a complex consisting of SKAP2, FYB1 and PTPNS1. Part of a complex consisting of SKAP2, FYB1 and PIRB. Part of a complex consisting of SKAP1, FYB1 and CLNK. Interacts with CLNK (via its SH2 domain); this interaction allows SKAP1 and FYB1 to recruit FYN to the complex, thus promoting the phosphorylation of CLNK by FYN. Interacts with FYN. Interacts with LCP2. Interacts with SKAP1. Interacts with SKAP2. Interacts with FASLG. Interacts with EVL. Interacts with TMEM47. Interacts with LCK. Post-translationally, T-cell receptor ligation leads to increased tyrosine phosphorylation. In terms of tissue distribution, expressed in hematopoietic tissues such as myeloid and T-cells, spleen and thymus. Not expressed in B-cells, nor in non-lymphoid tissues. FYB-130 is preferentially expressed in mature T-cells compared to FYB-120, whereas thymocytes showed a greater relative amount of FYB-120. Expressed in podocytes.

It is found in the cytoplasm. The protein localises to the nucleus. Its subcellular location is the cell junction. Functionally, acts as an adapter protein of the FYN and LCP2 signaling cascades in T-cells. May play a role in linking T-cell signaling to remodeling of the actin cytoskeleton. Modulates the expression of IL2. Involved in platelet activation. Prevents the degradation of SKAP1 and SKAP2. May be involved in high affinity immunoglobulin epsilon receptor signaling in mast cells. The polypeptide is FYN-binding protein 1 (Fyb1) (Mus musculus (Mouse)).